Reading from the N-terminus, the 329-residue chain is GTP 3',8-cyclase (329 aa).

The Radical SAM core domain occupies 8–234 (AFARKFYYLR…QLRQRSDGPA (227 aa)). Position 17 (arginine 17) interacts with GTP. [4Fe-4S] cluster is bound by residues cysteine 24 and cysteine 28. Tyrosine 30 is an S-adenosyl-L-methionine binding site. Position 31 (cysteine 31) interacts with [4Fe-4S] cluster. Residue arginine 68 coordinates GTP. Glycine 72 is an S-adenosyl-L-methionine binding site. Threonine 99 is a GTP binding site. Serine 123 is a binding site for S-adenosyl-L-methionine. Lysine 160 is a GTP binding site. An S-adenosyl-L-methionine-binding site is contributed by methionine 194. 2 residues coordinate [4Fe-4S] cluster: cysteine 257 and cysteine 260. 262–264 (RLR) serves as a coordination point for GTP. Cysteine 274 provides a ligand contact to [4Fe-4S] cluster.

Belongs to the radical SAM superfamily. MoaA family. As to quaternary structure, monomer and homodimer. The cofactor is [4Fe-4S] cluster.

It catalyses the reaction GTP + AH2 + S-adenosyl-L-methionine = (8S)-3',8-cyclo-7,8-dihydroguanosine 5'-triphosphate + 5'-deoxyadenosine + L-methionine + A + H(+). Its pathway is cofactor biosynthesis; molybdopterin biosynthesis. Functionally, catalyzes the cyclization of GTP to (8S)-3',8-cyclo-7,8-dihydroguanosine 5'-triphosphate. The protein is GTP 3',8-cyclase of Salmonella newport (strain SL254).